The primary structure comprises 161 residues: MQDAITAVINSADVQGKYLDGAAMDKLKSYFASGELRVRAASVISANAATIVKEAVAKSLLYSDVTRPGGNMYTTRRYAACIRDLDYYLRYATYAMLAGDASILDERVLNGLKETYNSLGVPISSTVQAIQAIKEVTASLVGADAGKEMGVYLDYICSGLS.

Residue Asn71 is modified to N4-methylasparagine. Cys81 is a (2R,3E)-phycocyanobilin binding site.

Belongs to the phycobiliprotein family. As to quaternary structure, heterodimer of an alpha and a beta chain. Contains one covalently linked phycocyanobilin chromophore.

It is found in the cellular thylakoid membrane. Its function is as follows. Light-harvesting photosynthetic bile pigment-protein from the phycobiliprotein complex. Allophycocyanin has a maximum absorption at approximately 650 nanometers. The chain is Allophycocyanin beta chain (apcB) from Synechocystis sp. (strain ATCC 27184 / PCC 6803 / Kazusa).